Reading from the N-terminus, the 406-residue chain is uncharacterized protein (406 aa).

The next 10 helical transmembrane spans lie at 7 to 27 (SILF…MVVI), 43 to 63 (VTLI…LITI), 69 to 89 (LTII…FYAL), 98 to 118 (LILV…FSPL), 155 to 175 (GLII…FLLF), 220 to 240 (IIIM…SVSL), 253 to 273 (WWGF…FIIY), 297 to 317 (LTLI…VLFM), 352 to 372 (VQFI…FLGV), and 374 to 394 (LVYV…FSQL).

The protein belongs to the major facilitator superfamily.

The protein localises to the cell membrane. This is an uncharacterized protein from Bacillus subtilis (strain 168).